The primary structure comprises 296 residues: 4-hydroxybenzoate octaprenyltransferase (296 aa).

8 consecutive transmembrane segments (helical) span residues 28-48 (PIGI…AAEG), 52-72 (LSHV…GCAI), 102-122 (ALIL…CTNA), 146-166 (YYPQ…TFTA), 169-189 (GELP…TVGY), 219-239 (VIIL…GARF), 241-261 (LGGW…WEFW), and 275-295 (FLHN…DYAL).

The protein belongs to the UbiA prenyltransferase family. Mg(2+) is required as a cofactor.

It is found in the cell inner membrane. The catalysed reaction is all-trans-octaprenyl diphosphate + 4-hydroxybenzoate = 4-hydroxy-3-(all-trans-octaprenyl)benzoate + diphosphate. It participates in cofactor biosynthesis; ubiquinone biosynthesis. Functionally, catalyzes the prenylation of para-hydroxybenzoate (PHB) with an all-trans polyprenyl group. Mediates the second step in the final reaction sequence of ubiquinone-8 (UQ-8) biosynthesis, which is the condensation of the polyisoprenoid side chain with PHB, generating the first membrane-bound Q intermediate 3-octaprenyl-4-hydroxybenzoate. This Pseudomonas fluorescens (strain ATCC BAA-477 / NRRL B-23932 / Pf-5) protein is 4-hydroxybenzoate octaprenyltransferase.